Reading from the N-terminus, the 142-residue chain is Nucleoside diphosphate kinase (142 aa).

Residues lysine 11, phenylalanine 59, arginine 87, threonine 93, arginine 104, and asparagine 114 each contribute to the ATP site. Histidine 117 acts as the Pros-phosphohistidine intermediate in catalysis.

This sequence belongs to the NDK family. In terms of assembly, homotetramer. It depends on Mg(2+) as a cofactor.

The protein localises to the cytoplasm. The catalysed reaction is a 2'-deoxyribonucleoside 5'-diphosphate + ATP = a 2'-deoxyribonucleoside 5'-triphosphate + ADP. The enzyme catalyses a ribonucleoside 5'-diphosphate + ATP = a ribonucleoside 5'-triphosphate + ADP. Major role in the synthesis of nucleoside triphosphates other than ATP. The ATP gamma phosphate is transferred to the NDP beta phosphate via a ping-pong mechanism, using a phosphorylated active-site intermediate. This is Nucleoside diphosphate kinase from Pectobacterium carotovorum subsp. carotovorum (strain PC1).